A 973-amino-acid polypeptide reads, in one-letter code: UvrABC system protein A (973 aa).

34–41 (GLSGSGKS) provides a ligand contact to ATP. 2 ABC transporter domains span residues 331–609 (WAKS…PKSL) and 629–958 (PKKK…QFLK). 662 to 669 (GVSGGGKS) contacts ATP. The segment at 761 to 787 (CEACQGDGVIKIEMHFLPDVYVTCDVC) adopts a C4-type zinc-finger fold.

This sequence belongs to the ABC transporter superfamily. UvrA family. Forms a heterotetramer with UvrB during the search for lesions.

Its subcellular location is the cytoplasm. Functionally, the UvrABC repair system catalyzes the recognition and processing of DNA lesions. UvrA is an ATPase and a DNA-binding protein. A damage recognition complex composed of 2 UvrA and 2 UvrB subunits scans DNA for abnormalities. When the presence of a lesion has been verified by UvrB, the UvrA molecules dissociate. This is UvrABC system protein A from Rhizobium meliloti (strain 1021) (Ensifer meliloti).